A 383-amino-acid polypeptide reads, in one-letter code: 3-dehydroquinate synthase (383 aa).

NAD(+)-binding positions include 81–86 (EGEVSK), 115–119 (GVVGD), 139–140 (TS), Lys-152, and Lys-161. Zn(2+) contacts are provided by Glu-194, His-256, and His-274.

This sequence belongs to the sugar phosphate cyclases superfamily. Dehydroquinate synthase family. Co(2+) is required as a cofactor. Requires Zn(2+) as cofactor. NAD(+) serves as cofactor.

It localises to the cytoplasm. It catalyses the reaction 7-phospho-2-dehydro-3-deoxy-D-arabino-heptonate = 3-dehydroquinate + phosphate. The protein operates within metabolic intermediate biosynthesis; chorismate biosynthesis; chorismate from D-erythrose 4-phosphate and phosphoenolpyruvate: step 2/7. In terms of biological role, catalyzes the conversion of 3-deoxy-D-arabino-heptulosonate 7-phosphate (DAHP) to dehydroquinate (DHQ). The protein is 3-dehydroquinate synthase of Nitrobacter winogradskyi (strain ATCC 25391 / DSM 10237 / CIP 104748 / NCIMB 11846 / Nb-255).